The following is a 547-amino-acid chain: Chaperonin GroEL (547 aa).

ATP is bound by residues 30-33, lysine 51, 87-91, glycine 415, 479-481, and aspartate 495; these read TLGP, DGTTT, and NAA.

This sequence belongs to the chaperonin (HSP60) family. In terms of assembly, forms a cylinder of 14 subunits composed of two heptameric rings stacked back-to-back. Interacts with the co-chaperonin GroES.

The protein localises to the cytoplasm. It carries out the reaction ATP + H2O + a folded polypeptide = ADP + phosphate + an unfolded polypeptide.. In terms of biological role, together with its co-chaperonin GroES, plays an essential role in assisting protein folding. The GroEL-GroES system forms a nano-cage that allows encapsulation of the non-native substrate proteins and provides a physical environment optimized to promote and accelerate protein folding. This Pseudomonas syringae pv. tomato (strain ATCC BAA-871 / DC3000) protein is Chaperonin GroEL.